A 169-amino-acid polypeptide reads, in one-letter code: Chorismate pyruvate-lyase (169 aa).

Met-37, Arg-79, Leu-117, and Glu-158 together coordinate substrate.

It belongs to the UbiC family. In terms of assembly, monomer.

It localises to the cytoplasm. The enzyme catalyses chorismate = 4-hydroxybenzoate + pyruvate. It functions in the pathway cofactor biosynthesis; ubiquinone biosynthesis. Functionally, removes the pyruvyl group from chorismate, with concomitant aromatization of the ring, to provide 4-hydroxybenzoate (4HB) for the ubiquinone pathway. The sequence is that of Chorismate pyruvate-lyase from Proteus mirabilis (strain HI4320).